The sequence spans 391 residues: 1-acyl-sn-glycerol-3-phosphate acyltransferase 2 (391 aa).

The chain crosses the membrane as a helical span at residues 3 to 23 (MAAAAVIVPLGILFFISGLVV). Positions 92-97 (HRSDID) match the HXXXXD motif motif. A run of 2 helical transmembrane segments spans residues 306-326 (LAVV…FLHW) and 334-354 (KGIA…QILI). The tract at residues 358 to 391 (QSERSTPAKVAPAKPKDKHQSGSSSQTEVEEKQK) is disordered.

The protein belongs to the 1-acyl-sn-glycerol-3-phosphate acyltransferase family.

The protein resides in the endoplasmic reticulum membrane. It carries out the reaction a 1-acyl-sn-glycero-3-phosphate + an acyl-CoA = a 1,2-diacyl-sn-glycero-3-phosphate + CoA. The protein operates within phospholipid metabolism; CDP-diacylglycerol biosynthesis; CDP-diacylglycerol from sn-glycerol 3-phosphate: step 2/3. Its function is as follows. Converts lysophosphatidic acid (LPA) into phosphatidic acid by incorporating acyl moiety at the 2 position. This chain is 1-acyl-sn-glycerol-3-phosphate acyltransferase 2 (LPAT2), found in Brassica oleracea (Wild cabbage).